A 274-amino-acid polypeptide reads, in one-letter code: MAVKTYKPTSPGRRFVTVSSFEEITKTEPEKSLIVPLKKHAGRNNQGRLTVRHRGGGHKRMYRIIDFKRNKDGIPAKVVAIEYDPNRTARIALLAYADGEKRYIIAPHGLKVGDVLMSGPDADIKVGNALPLANIPVGTLVHNIELYPGKGGQLVRAAGTAAQLLGKEGRYAILRLPSGEMRKVLLECRATIGQVGNLEHENITIGKAGRARWLGIRPTVRGVVMNPVDHPHGGGEGRSPIGRHPVTPWGKPTLGVKTRKKNKASSKLIIKRRK.

Positions 225–274 (MNPVDHPHGGGEGRSPIGRHPVTPWGKPTLGVKTRKKNKASSKLIIKRRK) are disordered. Basic residues predominate over residues 257–274 (KTRKKNKASSKLIIKRRK).

Belongs to the universal ribosomal protein uL2 family. As to quaternary structure, part of the 50S ribosomal subunit. Forms a bridge to the 30S subunit in the 70S ribosome.

Its function is as follows. One of the primary rRNA binding proteins. Required for association of the 30S and 50S subunits to form the 70S ribosome, for tRNA binding and peptide bond formation. It has been suggested to have peptidyltransferase activity; this is somewhat controversial. Makes several contacts with the 16S rRNA in the 70S ribosome. This Carboxydothermus hydrogenoformans (strain ATCC BAA-161 / DSM 6008 / Z-2901) protein is Large ribosomal subunit protein uL2.